Here is a 453-residue protein sequence, read N- to C-terminus: Allantoinase (453 aa).

6 residues coordinate Zn(2+): H59, H61, K146, H186, H242, and D315. K146 carries the post-translational modification N6-carboxylysine.

This sequence belongs to the metallo-dependent hydrolases superfamily. Allantoinase family. In terms of assembly, homotetramer. Requires Zn(2+) as cofactor. Carboxylation allows a single lysine to coordinate two zinc ions.

The catalysed reaction is (S)-allantoin + H2O = allantoate + H(+). It participates in nitrogen metabolism; (S)-allantoin degradation; allantoate from (S)-allantoin: step 1/1. In terms of biological role, catalyzes the conversion of allantoin (5-ureidohydantoin) to allantoic acid by hydrolytic cleavage of the five-member hydantoin ring. This is Allantoinase from Escherichia coli (strain 55989 / EAEC).